Reading from the N-terminus, the 49-residue chain is Osteocalcin (49 aa).

The 47-residue stretch at 1–47 (YLDHGLGAPAPYPDPLEPRREVCELNPDCDELADHIGFQEAYRRFYG) folds into the Gla domain. A Hydroxyproline modification is found at P9. The Ca(2+) site is built by E17, E21, E24, and D30. Residues E17, E21, and E24 each carry the 4-carboxyglutamate modification. C23 and C29 are oxidised to a cystine.

Belongs to the osteocalcin/matrix Gla protein family. Post-translationally, gamma-carboxyglutamate residues are formed by vitamin K dependent carboxylation by GGCX. These residues are essential for the binding of calcium. Decarboxylation promotes the hormone activity.

The protein resides in the secreted. Functionally, the carboxylated form is one of the main organic components of the bone matrix, which constitutes 1-2% of the total bone protein. It acts as a negative regulator of bone formation and is required to limit bone formation without impairing bone resorption or mineralization. The carboxylated form binds strongly to apatite and calcium. Its function is as follows. The uncarboxylated form acts as a hormone secreted by osteoblasts, which regulates different cellular processes, such as energy metabolism, male fertility and brain development. Regulates of energy metabolism by acting as a hormone favoring pancreatic beta-cell proliferation, insulin secretion and sensitivity and energy expenditure. Uncarboxylated osteocalcin hormone also promotes testosterone production in the testes: acts as a ligand for G protein-coupled receptor GPRC6A at the surface of Leydig cells, initiating a signaling response that promotes the expression of enzymes required for testosterone synthesis in a CREB-dependent manner. Also acts as a regulator of brain development: osteocalcin hormone crosses the blood-brain barrier and acts as a ligand for GPR158 on neurons, initiating a signaling response that prevents neuronal apoptosis in the hippocampus, favors the synthesis of all monoamine neurotransmitters and inhibits that of gamma-aminobutyric acid (GABA). Osteocalcin also crosses the placenta during pregnancy and maternal osteocalcin is required for fetal brain development. The sequence is that of Osteocalcin (BGLAP) from Sus scrofa (Pig).